The sequence spans 314 residues: Methionyl-tRNA formyltransferase (314 aa).

110 to 113 (SLLP) lines the (6S)-5,6,7,8-tetrahydrofolate pocket.

The protein belongs to the Fmt family.

It carries out the reaction L-methionyl-tRNA(fMet) + (6R)-10-formyltetrahydrofolate = N-formyl-L-methionyl-tRNA(fMet) + (6S)-5,6,7,8-tetrahydrofolate + H(+). Attaches a formyl group to the free amino group of methionyl-tRNA(fMet). The formyl group appears to play a dual role in the initiator identity of N-formylmethionyl-tRNA by promoting its recognition by IF2 and preventing the misappropriation of this tRNA by the elongation apparatus. The chain is Methionyl-tRNA formyltransferase from Bacillus cereus (strain AH187).